The sequence spans 102 residues: Hemoglobin subunit beta-Z (102 aa).

Residues 1 to 102 (FGNLSSAQAI…VANALSHKYH (102 aa)) enclose the Globin domain. Positions 19 and 48 each coordinate heme b.

It belongs to the globin family. As to quaternary structure, heterotetramer of two alpha chains and two beta chains.

Its function is as follows. This is an embryonic beta chain. The protein is Hemoglobin subunit beta-Z (HBBZ) of Mesocricetus auratus (Golden hamster).